A 242-amino-acid polypeptide reads, in one-letter code: Urease accessory protein UreF (242 aa).

Belongs to the UreF family. UreD, UreF and UreG form a complex that acts as a GTP-hydrolysis-dependent molecular chaperone, activating the urease apoprotein by helping to assemble the nickel containing metallocenter of UreC. The UreE protein probably delivers the nickel.

The protein resides in the cytoplasm. In terms of biological role, required for maturation of urease via the functional incorporation of the urease nickel metallocenter. The polypeptide is Urease accessory protein UreF (Bradyrhizobium diazoefficiens (strain JCM 10833 / BCRC 13528 / IAM 13628 / NBRC 14792 / USDA 110)).